The sequence spans 267 residues: Trehalose-phosphate phosphatase (267 aa).

Residue Asp20 is the Nucleophile of the active site. Mg(2+) contacts are provided by Asp20, Asp22, and Asp198. 20–22 is a binding site for substrate; that stretch reads DLD.

This sequence belongs to the trehalose phosphatase family. Mg(2+) is required as a cofactor.

It catalyses the reaction alpha,alpha-trehalose 6-phosphate + H2O = alpha,alpha-trehalose + phosphate. The protein operates within glycan biosynthesis; trehalose biosynthesis. Functionally, removes the phosphate from trehalose 6-phosphate to produce free trehalose. This Salmonella typhimurium (strain LT2 / SGSC1412 / ATCC 700720) protein is Trehalose-phosphate phosphatase (otsB).